The sequence spans 947 residues: Protein translocase subunit SecA 1 (947 aa).

Residues Gln-87, 105–109 (GEGKT), and Asp-525 each bind ATP. Residues 907–937 (DDADKAARDPNRPETWGKVGRNEDCPCNSGK) form a disordered region. The segment covering 908 to 918 (DADKAARDPNR) has biased composition (basic and acidic residues). Zn(2+) contacts are provided by Cys-931, Cys-933, Cys-942, and His-943.

It belongs to the SecA family. As to quaternary structure, monomer and homodimer. Part of the essential Sec protein translocation apparatus which comprises SecA, SecYEG and auxiliary proteins SecDF-YajC and YidC. Zn(2+) serves as cofactor.

It localises to the cell inner membrane. The protein resides in the cytoplasm. It carries out the reaction ATP + H2O + cellular proteinSide 1 = ADP + phosphate + cellular proteinSide 2.. In terms of biological role, part of the Sec protein translocase complex. Interacts with the SecYEG preprotein conducting channel. Has a central role in coupling the hydrolysis of ATP to the transfer of proteins into and across the cell membrane, serving both as a receptor for the preprotein-SecB complex and as an ATP-driven molecular motor driving the stepwise translocation of polypeptide chains across the membrane. The protein is Protein translocase subunit SecA 1 of Rhodopseudomonas palustris (strain BisA53).